Reading from the N-terminus, the 301-residue chain is MGDDIGTAGVPAFYCCYLLRSIPKRLSYYIGSTPNPVRRLRQHNGLLTKGGAYRTKRQGTRPWELAASVSGFPSKIAALQFEHAWQHPYQTRFIKSEDRIVKKKGGGRSIHQRLAVLKLLLHHPFFKVMSLVVHLFSEDIQRVWFLDKYKLEAPFIHVEVDEDALSEPTGEDEESVIEHAKKNLRLVELFYGRSLKEDSECLEEYRRRLQNGAMRCAICEKIVDYVKDSDSFSSEKELVAFCYNSVCDYFSCLSCLYNVFASDEELRTGEIPLIPTSGQCPNCNIELSWARIVRYSMFLSA.

Positions 12–95 constitute a GIY-YIG domain; it reads AFYCCYLLRS…QHPYQTRFIK (84 aa). The segment at 216–283 adopts an SLX1-type zinc-finger fold; sequence CAICEKIVDY…IPTSGQCPNC (68 aa).

Belongs to the SLX1 family. Forms a heterodimer with SLX4. A divalent metal cation serves as cofactor.

Its subcellular location is the nucleus. Functionally, catalytic subunit of the SLX1-SLX4 structure-specific endonuclease that resolves DNA secondary structures generated during DNA repair and recombination. Has endonuclease activity towards branched DNA substrates, introducing single-strand cuts in duplex DNA close to junctions with ss-DNA. The chain is Structure-specific endonuclease subunit SLX1 from Eremothecium gossypii (strain ATCC 10895 / CBS 109.51 / FGSC 9923 / NRRL Y-1056) (Yeast).